Reading from the N-terminus, the 92-residue chain is C-C motif chemokine 4-like (92 aa).

Positions 1-23 are cleaved as a signal peptide; it reads MKLCVTVLSLLVLVAAFCSLALS. Intrachain disulfides connect Cys34–Cys58 and Cys35–Cys74.

This sequence belongs to the intercrine beta (chemokine CC) family. As to quaternary structure, interacts with CCR5. In terms of tissue distribution, detected in B-cells.

Its subcellular location is the secreted. Functionally, chemokine that induces chemotaxis of cells expressing CCR5 or CCR1. Inhibits HIV replication in peripheral blood monocytes that express CCR5. The chain is C-C motif chemokine 4-like (CCL4L1) from Homo sapiens (Human).